We begin with the raw amino-acid sequence, 275 residues long: MTLQQEIIQALGAKPHINPEEEIRRSVDFLKAYLKTYPFLKSLVLGISGGQDSTLAGKLSQMAIAELREETGDNALQFIAVRLPYGVQADEQDCQDAIAFIQPDRVLTVNIKGAVLASEQALREAGIELSDFVRGNEKARERMKAQYSIAGMTHGVVVGTDHAAEAITGFFTKYGDGGTDINPLHRLNKRQGKQLLAALGCPEHLYKKVPTADLEDDRPSLPDEAALGVTYDNIDDYLEGKTLDSAIAKTIEGWYVKTEHKRRLPITVFDDFWKK.

Glycine 46–serine 53 provides a ligand contact to ATP. Aspartate 52 provides a ligand contact to Mg(2+). Arginine 140 contacts deamido-NAD(+). Threonine 160 is a binding site for ATP. Position 165 (glutamate 165) interacts with Mg(2+). Deamido-NAD(+) is bound by residues lysine 173 and aspartate 180. Positions 189 and 211 each coordinate ATP. Histidine 260–lysine 261 is a deamido-NAD(+) binding site.

The protein belongs to the NAD synthetase family. Homodimer.

The catalysed reaction is deamido-NAD(+) + NH4(+) + ATP = AMP + diphosphate + NAD(+) + H(+). It functions in the pathway cofactor biosynthesis; NAD(+) biosynthesis; NAD(+) from deamido-NAD(+) (ammonia route): step 1/1. Its function is as follows. Catalyzes the ATP-dependent amidation of deamido-NAD to form NAD. Uses ammonia as a nitrogen source. This chain is NH(3)-dependent NAD(+) synthetase, found in Salmonella heidelberg (strain SL476).